Reading from the N-terminus, the 380-residue chain is Queuine tRNA-ribosyltransferase (380 aa).

Asp-96 serves as the catalytic Proton acceptor. Substrate contacts are provided by residues Asp-96–Phe-100, Asp-150, Gln-193, and Gly-220. Residues Gly-251–Ser-257 are RNA binding. Asp-270 functions as the Nucleophile in the catalytic mechanism. An RNA binding; important for wobble base 34 recognition region spans residues Thr-275–Arg-279. Residues Cys-308, Cys-310, Cys-313, and His-339 each coordinate Zn(2+).

The protein belongs to the queuine tRNA-ribosyltransferase family. As to quaternary structure, homodimer. Within each dimer, one monomer is responsible for RNA recognition and catalysis, while the other monomer binds to the replacement base PreQ1. The cofactor is Zn(2+).

It carries out the reaction 7-aminomethyl-7-carbaguanine + guanosine(34) in tRNA = 7-aminomethyl-7-carbaguanosine(34) in tRNA + guanine. The protein operates within tRNA modification; tRNA-queuosine biosynthesis. Functionally, catalyzes the base-exchange of a guanine (G) residue with the queuine precursor 7-aminomethyl-7-deazaguanine (PreQ1) at position 34 (anticodon wobble position) in tRNAs with GU(N) anticodons (tRNA-Asp, -Asn, -His and -Tyr). Catalysis occurs through a double-displacement mechanism. The nucleophile active site attacks the C1' of nucleotide 34 to detach the guanine base from the RNA, forming a covalent enzyme-RNA intermediate. The proton acceptor active site deprotonates the incoming PreQ1, allowing a nucleophilic attack on the C1' of the ribose to form the product. After dissociation, two additional enzymatic reactions on the tRNA convert PreQ1 to queuine (Q), resulting in the hypermodified nucleoside queuosine (7-(((4,5-cis-dihydroxy-2-cyclopenten-1-yl)amino)methyl)-7-deazaguanosine). The chain is Queuine tRNA-ribosyltransferase from Streptococcus pneumoniae (strain P1031).